A 613-amino-acid polypeptide reads, in one-letter code: pH-response transcription factor pacC/RIM101 (613 aa).

The disordered stretch occupies residues methionine 1–aspartate 61. Low complexity predominate over residues glutamine 11–serine 60. 3 C2H2-type zinc fingers span residues leucine 64–histidine 89, leucine 100–histidine 124, and histidine 130–histidine 152. The segment covering lysine 146–valine 157 has biased composition (basic and acidic residues). 4 disordered regions span residues lysine 146–threonine 186, asparagine 371–glycine 391, alanine 406–glutamate 535, and glutamate 565–alanine 613. Positions proline 417–serine 441 are enriched in low complexity. Polar residues-rich tracts occupy residues arginine 442–alanine 460 and serine 506–alanine 517. The YPX[LI] motif 1 motif lies at tyrosine 451–leucine 454. Positions tyrosine 605–leucine 608 match the YPX[LI] motif 2 motif.

It belongs to the pacC/RIM101 family. As to quaternary structure, binds to DNA. Activated by C-terminal proteolytic cleavage by signaling protease (probably palB/RIM13) at neutral to alkaline ambient pH.

The protein localises to the cytoplasm. Its subcellular location is the nucleus. Functionally, transcription factor that mediates regulation of both acid- and alkaline-expressed genes in response to ambient pH. At alkaline ambient pH, activates transcription of alkaline-expressed genes (including PAC1 itself) and represses transcription of acid-expressed genes. The protein is pH-response transcription factor pacC/RIM101 (PAC1) of Gibberella moniliformis (Maize ear and stalk rot fungus).